Reading from the N-terminus, the 272-residue chain is Acidic leucine-rich nuclear phosphoprotein 32-related protein 2 (272 aa).

LRR repeat units follow at residues serine 57–proline 78, alanine 79–alanine 100, and threonine 106–alanine 127. The LRRCT domain maps to cysteine 139–glutamate 184. The disordered stretch occupies residues glycine 163–asparagine 272. Residues methionine 164 to glutamate 241 show a composition bias toward acidic residues. Polar residues predominate over residues serine 248–proline 257.

The protein belongs to the ANP32 family.

The polypeptide is Acidic leucine-rich nuclear phosphoprotein 32-related protein 2 (Oryza sativa subsp. japonica (Rice)).